Reading from the N-terminus, the 582-residue chain is MKYRTHKCNELSLNHVGEHVRLSGWVHRYRNHGGVVFIDLRDRFGITQIVCRQEENPELHRLMDQVRSEWVLCVEGLVCARLGGMENPNLVTGSIEVEVSHLEVLSRAQNLPFSISDEHINVNEELRLTYRYLDMRRGDIVDRLMCRHKVMLACRQYLDEQGFTEVVTPVLGKSTPEGARDYLVPSRIYPGNFYALPQSPQLFKQILMVGGLDRYFQIATCFRDEDLRADRQPEFSQIDMEMSFGGPEDLFPIVEELVTRLFAVKGIELSIPFQRMTYQEAKEFYGTDKPDLRFGLRLKNCCEYAKKFSFSIFLDQLAQGGTVKGFCVPGGADISRKQLDVYTDFVKRYGAMGLVWIKNQDGGISSNVAKFASEEVFHEMFEAFEAKDQDILLLIAAPEAIANQSLDHLRRLIAKERQLYDAEQYNFVWITDFPLFAKEEGELCSEHHPFTAPLEEDIPLLDKDPLSVRSSSYDLVLNGYEIASGSQRIHNPDLQNKIFSLLRLSQESVKEKFGFFIDALSFGTPPHLGIALGLDRIMMVLTGAETIREVIAFPKTQKAGDLMMSAPSEILPIQLKELGLKL.

E177 is a binding site for L-aspartate. The interval 201 to 204 (QLFK) is aspartate. R223 contributes to the L-aspartate binding site. ATP-binding positions include 223 to 225 (RDE) and Q232. H447 contributes to the L-aspartate binding site. ATP is bound at residue E481. R488 is a binding site for L-aspartate. 533–536 (GLDR) provides a ligand contact to ATP.

Belongs to the class-II aminoacyl-tRNA synthetase family. Type 1 subfamily. In terms of assembly, homodimer.

The protein resides in the cytoplasm. It carries out the reaction tRNA(Asx) + L-aspartate + ATP = L-aspartyl-tRNA(Asx) + AMP + diphosphate. Its function is as follows. Aspartyl-tRNA synthetase with relaxed tRNA specificity since it is able to aspartylate not only its cognate tRNA(Asp) but also tRNA(Asn). Reaction proceeds in two steps: L-aspartate is first activated by ATP to form Asp-AMP and then transferred to the acceptor end of tRNA(Asp/Asn). The sequence is that of Aspartate--tRNA(Asp/Asn) ligase from Chlamydia muridarum (strain MoPn / Nigg).